Consider the following 1462-residue polypeptide: MRIQKRRTHVENILRILLPPIMILSLILPTPPIHAEESAAPQVHLSILATTDIHANMMDYDYYSDKETADFGLARTAQLIQKHREQNPNTLLVDNGDLIQGNPLGEYAVKYQKDDIISGTKTHPIISVMNALKYDAGTLGNHEFNYGLDFLDGTIKGADFPIVNANVKTTSGENRYTPYVINEKTLIDENGNEQKVKVGYIGFVPPQIMTWDKKNLEGQVQVQDIVESANETIPKMKAEGADVIIALAHTGIEKQAQSSGAENAVFDLATKTKGIDAIISGHQHGLFPSAEYAGVAQFNVEKGTINGIPVVMPSSWGKYLGVIDLKLEKADGSWKVADSKGSIESIAGNVTSRNETVTNTIQQTHQNTLEYVRKPVGKTEADINSFFAQVKDDPSIQIVTDAQKWYAEKEMKDTEYKNLPILSAGAPFKAGGRNGANYYTNIPAGDLAIKNVGDLYLYDNTVQIVKLTGSEVKDWLEMSAGQFNQIDPAKGGDQALLNENFRSYNFDVIDGVTYQVDVTKPAKYNENGKVINADSSRIINLSYEGKPISPSQEFLVVTNNYRASGGGGFPHLTSDKIVHGSAVENRQVLMDYIIEQKTVNPKADNNWSIAPVSGTNLTFESSLLAKPFADKADDVAYVGKSANEGYGVYKLQFDDDSNPDPPKDGLWDLTVMHTNDTHAHLDDAARRMTKINEVRSETNHNILLDAGDVFSGDLYFTKWNGLADLKMMNMMGYDAMTFGNHEFDKGPTVLSDFLSGNSATVDPANRYHFEAPEFPIVSANVDVSNEPKLKSFVKKPQTFTAGEKKEAGIHPYILLDVDGEKVAVFGLTTEDTATTSSPGKSIVFNDAFETAQNTVKAIQEEEKVNKIIALTHIGHNRDLELAKKVKGIDLIIGGHTHTLVDKMEVVNNEEPTIVAQAKEYGQFLGRVDVAFDEKGVVQTDKSNLSVLPIDEHTEENPEAKQELDQFKNELEDVKNEKVGYTDVALDGQREHVRTKETNLGNFIADGMLAKAKEAAGARIAITNGGGIRAGIDKGDITLGEVLNVMPFGNTLYVADLTGKQIKEALEQGLSNVENGGGAFPQVAGIEYTFTLNNKPGHRVLEVKIESPNGDKVAINTDDTYRVATNNFVGAGGDGYSVFTEASHGEDLGYVDYEIFTEQLKKLGNKVSPKVEGRIKEVFLPTKQKDGSWTLDEDKFAIYAKNANTPFVYYGIHEGSQEKPINLKVKKDQVKLLKERESDPSLTMFNYWYSMKMPMANLKTADTAIGIKSTGELDVSLSDVYDFTVKQKGKEIKSFKEPVQLSLRMFDIEEAHNPAIYHVDRKKKAFTKTGHGSVDDDMVTGYTNHFSEYTILNSGSNNKPPAFPSDQPTGGDDGNHGGGSDKPGGKQPTDGNGGNDTPPGTQPTNGSGGNGSGGSGTDGPAGGLLPDTATSMYSILLAGFLISALGTAMYLHQRRKQNRANQA.

The N-terminal stretch at M1 to A35 is a signal peptide. A 2',3'-cyclic nucleotide 2'-phosphodiesterase/3'-nucleotidase region spans residues E36–L623. A divalent metal cation is bound by residues D52, H54, D97, N141, H249, H282, and H284. A ribonucleoside 3'-phosphate-binding positions include Y458 and Y561–G567. Residues L624–T1427 are 5'-nucleotidase. Positions 676, 678, 708, 740, 872, 895, and 897 each coordinate a divalent metal cation. Residues F1047 and F1127–D1133 each bind a ribonucleoside 5'-phosphate. A disordered region spans residues I1350–G1422. Over residues G1405–G1421 the composition is skewed to gly residues. Positions L1424 to A1428 match the LPXTG sorting signal motif. T1427 carries the pentaglycyl murein peptidoglycan amidated threonine modification. Residues A1428–A1462 constitute a propeptide, removed by sortase.

This sequence belongs to the 5'-nucleotidase family. It depends on a divalent metal cation as a cofactor.

It is found in the secreted. The protein localises to the cell wall. It catalyses the reaction a nucleoside 2',3'-cyclic phosphate + H2O = a nucleoside 3'-phosphate + H(+). It carries out the reaction a ribonucleoside 3'-phosphate + H2O = a ribonucleoside + phosphate. The catalysed reaction is a ribonucleoside 5'-phosphate + H2O = a ribonucleoside + phosphate. Catalyzes the release of inorganic phosphate from 2',3'-cyclic nucleotides through consecutive 2',3'-phosphodiesterase and 3'- (or 2') nucleotidase activities. Also possesses a 5'-nucleotidase activity. Does not catalyze the release of inorganic phosphate from 3',5'-cyclic nucleotides. Probably plays a role in the cellular reprocessing of nucleotides present in the medium, under conditions of phosphate shortage. This Bacillus subtilis (strain 168) protein is Trifunctional nucleotide phosphoesterase protein YfkN (yfkN).